The primary structure comprises 1060 residues: DNA-directed RNA polymerase subunit beta (1060 aa).

Belongs to the RNA polymerase beta chain family. In terms of assembly, in plastids the minimal PEP RNA polymerase catalytic core is composed of four subunits: alpha, beta, beta', and beta''. When a (nuclear-encoded) sigma factor is associated with the core the holoenzyme is formed, which can initiate transcription.

It is found in the plastid. The protein localises to the chloroplast. The enzyme catalyses RNA(n) + a ribonucleoside 5'-triphosphate = RNA(n+1) + diphosphate. In terms of biological role, DNA-dependent RNA polymerase catalyzes the transcription of DNA into RNA using the four ribonucleoside triphosphates as substrates. This chain is DNA-directed RNA polymerase subunit beta, found in Helianthus annuus (Common sunflower).